We begin with the raw amino-acid sequence, 571 residues long: Chondroitin sulfate proteoglycan 5 (571 aa).

Positions 1 to 30 are cleaved as a signal peptide; that stretch reads MGRAGGGGPGWGPPPVLLLLGVTLVLTAGA. The Extracellular portion of the chain corresponds to 31 to 428; the sequence is VPAREAGSAI…SIITDFQVMC (398 aa). Serine 38 carries O-linked (Xyl...) (chondroitin sulfate) serine glycosylation. N-linked (GlcNAc...) asparagine glycosylation occurs at asparagine 57. Residues 57–91 form a disordered region; that stretch reads NDTREEAGLPAAGEDETSWTERGSELAAVGPGVGP. Threonine 76 carries O-linked (GalNAc...) threonine glycosylation. The O-linked (Xyl...) (chondroitin sulfate) serine glycan is linked to serine 123. An O-linked (GalNAc...) threonine glycan is attached at threonine 132. Disordered stretches follow at residues 137 to 169, 186 to 254, and 279 to 357; these read DEAL…KPSL, GGST…TPSW, and DDLE…DLAT. An O-linked (GalNAc...) serine glycan is attached at serine 143. Threonine 144 and threonine 153 each carry an O-linked (GalNAc...) threonine glycan. O-linked (GalNAc...) serine glycosylation is found at serine 156 and serine 160. O-linked (GalNAc...) threonine glycans are attached at residues threonine 162 and threonine 198. Acidic residues predominate over residues 214-223; it reads IDIDYFEGLD. An O-linked (GalNAc...) threonine glycan is attached at threonine 240. The interval 270 to 306 is interaction with TNC and TNR; that stretch reads DFYPTTSFYDDLEEEEEEEEDKDAVGGGDLEDESDLL. The segment covering 279 to 291 has biased composition (acidic residues); that stretch reads DDLEEEEEEEEDK. 2 O-linked (GalNAc...) threonine glycosylation sites follow: threonine 318 and threonine 322. The N-linked (GlcNAc...) asparagine glycan is linked to asparagine 372. The region spanning 376–418 is the EGF-like domain; that stretch reads RSVCDLFPSYCHNGGQCYLVENIGAFCRCNTQDYIWHKGMRCE. 3 disulfides stabilise this stretch: cysteine 379–cysteine 392, cysteine 386–cysteine 402, and cysteine 404–cysteine 417. Residues 429-449 traverse the membrane as a helical segment; the sequence is VAVGSAALVLLLLFMMTVFFA. The interaction with GOPC stretch occupies residues 447–465; the sequence is FFAKKLYLLKTENTKLRRT. Residues 450–571 lie on the Cytoplasmic side of the membrane; the sequence is KKLYLLKTEN…EVNCLQNNLT (122 aa). A phosphoserine mark is found at serine 472, serine 480, serine 488, and serine 548. A disordered region spans residues 538–563; sequence EESFNIQNSMSPKLEGGKGDQDDLEV.

In terms of assembly, interacts with ERBB3 and GOPC. Binds TNR and probably TNC. Interacts with MDK; this interaction is independent of the presence of chondroitin sulfate chains and promotes elongation of oligodendroglial precursor-like cells. Post-translationally, N-glycosylated. O-glycosylated; contains chondroitin sulfate glycans. Part-time proteoglycan, expressed in part as a proteoglycan exhibiting chondroitin sulfate glycans and in part as a non-proteoglycan form. The relative amount of both forms depends on tissues and tissue maturation. In terms of processing, phosphorylated; in intracellular and extracellular parts. As to expression, expressed in cerebral cortex and cerebellum. Expressed in retina (at protein level).

It is found in the cell membrane. The protein resides in the synaptic cell membrane. Its subcellular location is the endoplasmic reticulum membrane. The protein localises to the golgi apparatus membrane. It localises to the cell surface. It is found in the secreted. Its function is as follows. May function as a growth and differentiation factor involved in neuritogenesis. May induce ERBB3 activation. This Rattus norvegicus (Rat) protein is Chondroitin sulfate proteoglycan 5 (Cspg5).